The chain runs to 246 residues: Acetoacetate decarboxylase (246 aa).

Lys116 functions as the Schiff-base intermediate with acetoacetate in the catalytic mechanism.

It belongs to the ADC family.

The enzyme catalyses acetoacetate + H(+) = acetone + CO2. Catalyzes the conversion of acetoacetate to acetone and carbon dioxide. In Burkholderia vietnamiensis (strain G4 / LMG 22486) (Burkholderia cepacia (strain R1808)), this protein is Acetoacetate decarboxylase.